The following is a 257-amino-acid chain: Thiazole synthase (257 aa).

Lys97 serves as the catalytic Schiff-base intermediate with DXP. Residues Gly158, 184–185, and 206–207 contribute to the 1-deoxy-D-xylulose 5-phosphate site; these read AG and NT.

This sequence belongs to the ThiG family. In terms of assembly, homotetramer. Forms heterodimers with either ThiH or ThiS.

The protein resides in the cytoplasm. It carries out the reaction [ThiS sulfur-carrier protein]-C-terminal-Gly-aminoethanethioate + 2-iminoacetate + 1-deoxy-D-xylulose 5-phosphate = [ThiS sulfur-carrier protein]-C-terminal Gly-Gly + 2-[(2R,5Z)-2-carboxy-4-methylthiazol-5(2H)-ylidene]ethyl phosphate + 2 H2O + H(+). It participates in cofactor biosynthesis; thiamine diphosphate biosynthesis. Functionally, catalyzes the rearrangement of 1-deoxy-D-xylulose 5-phosphate (DXP) to produce the thiazole phosphate moiety of thiamine. Sulfur is provided by the thiocarboxylate moiety of the carrier protein ThiS. In vitro, sulfur can be provided by H(2)S. This Phocaeicola vulgatus (strain ATCC 8482 / DSM 1447 / JCM 5826 / CCUG 4940 / NBRC 14291 / NCTC 11154) (Bacteroides vulgatus) protein is Thiazole synthase.